Consider the following 492-residue polypeptide: Adenosylhomocysteinase (492 aa).

Substrate-binding residues include T68, D153, and E215. 216 to 218 (TTT) serves as a coordination point for NAD(+). Residues K245 and D249 each contribute to the substrate site. NAD(+)-binding positions include N250, 279-284 (GYGDVG), E302, N337, 358-360 (IGH), and N406.

This sequence belongs to the adenosylhomocysteinase family. The cofactor is NAD(+).

The protein resides in the cytoplasm. It carries out the reaction S-adenosyl-L-homocysteine + H2O = L-homocysteine + adenosine. Its pathway is amino-acid biosynthesis; L-homocysteine biosynthesis; L-homocysteine from S-adenosyl-L-homocysteine: step 1/1. May play a key role in the regulation of the intracellular concentration of adenosylhomocysteine. In Mycobacterium leprae (strain Br4923), this protein is Adenosylhomocysteinase.